The following is a 118-amino-acid chain: Ribonuclease P protein component (118 aa).

Belongs to the RnpA family. As to quaternary structure, consists of a catalytic RNA component (M1 or rnpB) and a protein subunit.

It catalyses the reaction Endonucleolytic cleavage of RNA, removing 5'-extranucleotides from tRNA precursor.. In terms of biological role, RNaseP catalyzes the removal of the 5'-leader sequence from pre-tRNA to produce the mature 5'-terminus. It can also cleave other RNA substrates such as 4.5S RNA. The protein component plays an auxiliary but essential role in vivo by binding to the 5'-leader sequence and broadening the substrate specificity of the ribozyme. This is Ribonuclease P protein component from Shewanella sp. (strain ANA-3).